The chain runs to 404 residues: uncharacterized protein (404 aa).

Disordered regions lie at residues 261–307 (VSTG…SPSL) and 320–340 (KKSHSANDSEEFFREDDGGAD). A phosphoserine mark is found at Ser-267, Ser-276, and Ser-279. Residues Thr-290 and Thr-293 each carry the phosphothreonine modification. Residues Ser-304, Ser-306, Ser-324, Ser-358, and Ser-362 each carry the phosphoserine modification. Basic and acidic residues predominate over residues 320–336 (KKSHSANDSEEFFREDD).

This is an uncharacterized protein from Homo sapiens (Human).